The primary structure comprises 258 residues: Putative cysteine-rich repeat secretory protein 35 (258 aa).

Positions 1 to 29 (MYSSYSLSKRLIYVPILAIQFLLVRSVSS) are cleaved as a signal peptide. Gnk2-homologous domains follow at residues 36–138 (YLNH…TIKP) and 146–255 (FKNT…LYPF).

It belongs to the cysteine-rich repeat secretory protein family.

The protein resides in the secreted. This is Putative cysteine-rich repeat secretory protein 35 (CRRSP35) from Arabidopsis thaliana (Mouse-ear cress).